The sequence spans 250 residues: 2,3-bisphosphoglycerate-dependent phosphoglycerate mutase (250 aa).

Residues 8–15, 21–22, R60, 87–90, K98, 114–115, and 183–184 each bind substrate; these read RHGQSAWN, TG, ERHY, RR, and GN. The active-site Tele-phosphohistidine intermediate is the H9. The active-site Proton donor/acceptor is E87.

This sequence belongs to the phosphoglycerate mutase family. BPG-dependent PGAM subfamily. In terms of assembly, homodimer.

It carries out the reaction (2R)-2-phosphoglycerate = (2R)-3-phosphoglycerate. Its pathway is carbohydrate degradation; glycolysis; pyruvate from D-glyceraldehyde 3-phosphate: step 3/5. Functionally, catalyzes the interconversion of 2-phosphoglycerate and 3-phosphoglycerate. The protein is 2,3-bisphosphoglycerate-dependent phosphoglycerate mutase of Nitratidesulfovibrio vulgaris (strain DP4) (Desulfovibrio vulgaris).